A 446-amino-acid chain; its full sequence is Glucose-6-phosphate isomerase (446 aa).

Glu288 (proton donor) is an active-site residue. Residues His309 and Lys423 contribute to the active site.

It belongs to the GPI family.

It is found in the cytoplasm. It carries out the reaction alpha-D-glucose 6-phosphate = beta-D-fructose 6-phosphate. The protein operates within carbohydrate biosynthesis; gluconeogenesis. Its pathway is carbohydrate degradation; glycolysis; D-glyceraldehyde 3-phosphate and glycerone phosphate from D-glucose: step 2/4. Catalyzes the reversible isomerization of glucose-6-phosphate to fructose-6-phosphate. The chain is Glucose-6-phosphate isomerase from Lactobacillus delbrueckii subsp. bulgaricus (strain ATCC 11842 / DSM 20081 / BCRC 10696 / JCM 1002 / NBRC 13953 / NCIMB 11778 / NCTC 12712 / WDCM 00102 / Lb 14).